Reading from the N-terminus, the 261-residue chain is MYTDTGLAVRVIPCLDVDAGRVVKGVNFENLRDAGDPVELAAAYDAEGADELTFLDVTASSSGRATMLEVVRHTAEQVFIPLTVGGGVRTVADVDLLLRAGADKVSVNTAAIARPDLLADMATQFGSQCIVLSVDARKVPVGPAPTPSGWEVTTHGGRRGTGIDAVEWAARGADLGVGEILLNSMDADGTKAGFDLAMLRAVRAAVTVPVIASGGAGNVDHFAPAVAAGADAVLAASVFHFRELTIGQVKAAMAAEGITVR.

Catalysis depends on residues Asp-16 and Asp-135.

This sequence belongs to the HisA/HisF family. As to quaternary structure, heterodimer of HisH and HisF.

The protein resides in the cytoplasm. It catalyses the reaction 5-[(5-phospho-1-deoxy-D-ribulos-1-ylimino)methylamino]-1-(5-phospho-beta-D-ribosyl)imidazole-4-carboxamide + L-glutamine = D-erythro-1-(imidazol-4-yl)glycerol 3-phosphate + 5-amino-1-(5-phospho-beta-D-ribosyl)imidazole-4-carboxamide + L-glutamate + H(+). It functions in the pathway amino-acid biosynthesis; L-histidine biosynthesis; L-histidine from 5-phospho-alpha-D-ribose 1-diphosphate: step 5/9. Its function is as follows. IGPS catalyzes the conversion of PRFAR and glutamine to IGP, AICAR and glutamate. The HisF subunit catalyzes the cyclization activity that produces IGP and AICAR from PRFAR using the ammonia provided by the HisH subunit. In Mycobacterium marinum (strain ATCC BAA-535 / M), this protein is Imidazole glycerol phosphate synthase subunit HisF.